Reading from the N-terminus, the 78-residue chain is MSDIEARVKKIIAEQLGVEESQVTNEKAFVADLGADSLDTVELVMALEDEFGIEIPDEDAEKITTVQNAIDYANTHQA.

Residues 2–77 form the Carrier domain; sequence SDIEARVKKI…NAIDYANTHQ (76 aa). S37 is modified (O-(pantetheine 4'-phosphoryl)serine).

This sequence belongs to the acyl carrier protein (ACP) family. In terms of processing, 4'-phosphopantetheine is transferred from CoA to a specific serine of apo-ACP by AcpS. This modification is essential for activity because fatty acids are bound in thioester linkage to the sulfhydryl of the prosthetic group.

The protein resides in the cytoplasm. Its pathway is lipid metabolism; fatty acid biosynthesis. In terms of biological role, carrier of the growing fatty acid chain in fatty acid biosynthesis. This Comamonas testosteroni (Pseudomonas testosteroni) protein is Acyl carrier protein.